The primary structure comprises 215 residues: Short neuropeptide F (215 aa).

An N-terminal signal peptide occupies residues 1–22 (MCRINFTTLSLILVLWSGSLMS). Positions 23–56 (EPSQNADGSIKGLYEYLLQREYAAPVSYADHQIK) are excised as a propeptide. Phenylalanine amide is present on residues Phe69 and Phe101. At Trp129 the chain carries Tryptophan amide. Phe157 carries the post-translational modification Phenylalanine amide. Residues 160-215 (SDPSWAMFNEHQLDEQQFADATRQPSKTLRGDEPTSIESTEQVESEENSPSNMDEK) constitute a propeptide that is removed on maturation. A disordered region spans residues 173–215 (DEQQFADATRQPSKTLRGDEPTSIESTEQVESEENSPSNMDEK).

Belongs to the NPY family.

The protein localises to the secreted. Functionally, plays a role in controlling food intake and regulating body size. The chain is Short neuropeptide F from Aedes aegypti (Yellowfever mosquito).